Reading from the N-terminus, the 410-residue chain is Thyroid hormone receptor alpha (410 aa).

The disordered stretch occupies residues 1 to 32 (MEQKPSKVECGSDPEESSTRSPDGKRKRKNGQ). Positions 1-52 (MEQKPSKVECGSDPEESSTRSPDGKRKRKNGQCSLKTSMSGYIPSYLDKDEQ) are modulating. Zn(2+)-binding residues include Cys53, Cys56, Cys70, Cys73, Cys91, Cys97, Cys107, and Cys110. NR C4-type zinc fingers lie at residues 53–73 (CVVC…CEGC) and 91–115 (CKYD…FKKC). Residues 53 to 127 (CVVCGDKATG…VGMAMDLVLD (75 aa)) constitute a DNA-binding region (nuclear receptor). Residues 163 to 407 (EEWDLIHVAT…PPLFLEVFED (245 aa)) form the NR LBD domain. Arg228 and Ser277 together coordinate 3,3',5-triiodo-L-thyronine.

It belongs to the nuclear hormone receptor family. NR1 subfamily. Binds DNA as a dimer; homodimer and heterodimer with RXRB. Interacts with NCOA3 and NCOA6 coactivators, leading to a strong increase of transcription of target genes. Probably interacts with SFPQ. Interacts with C1D. Interacts with AKAP13. Interacts with TP53INP2. Interacts with PER2. Interacts with TACC1. The interaction with isoform alpha-1, but not alpha-2, is decreased in the presence of thyroid hormone T3.

It localises to the nucleus. The protein resides in the cytoplasm. Functionally, nuclear hormone receptor that can act as a repressor or activator of transcription. High affinity receptor for thyroid hormones, including triiodothyronine and thyroxine. This chain is Thyroid hormone receptor alpha (THRA), found in Ovis aries (Sheep).